The primary structure comprises 477 residues: Bifunctional protein HldE (477 aa).

The ribokinase stretch occupies residues 1–318 (MKVTLPEFER…ENAVRGRADT (318 aa)). Residue 195–198 (NLSE) participates in ATP binding. The active site involves aspartate 264. The cytidylyltransferase stretch occupies residues 344–477 (MTNGVFDILH…IKKIQKDSDK (134 aa)).

In the N-terminal section; belongs to the carbohydrate kinase PfkB family. The protein in the C-terminal section; belongs to the cytidylyltransferase family. As to quaternary structure, homodimer.

The catalysed reaction is D-glycero-beta-D-manno-heptose 7-phosphate + ATP = D-glycero-beta-D-manno-heptose 1,7-bisphosphate + ADP + H(+). The enzyme catalyses D-glycero-beta-D-manno-heptose 1-phosphate + ATP + H(+) = ADP-D-glycero-beta-D-manno-heptose + diphosphate. Its pathway is nucleotide-sugar biosynthesis; ADP-L-glycero-beta-D-manno-heptose biosynthesis; ADP-L-glycero-beta-D-manno-heptose from D-glycero-beta-D-manno-heptose 7-phosphate: step 1/4. It functions in the pathway nucleotide-sugar biosynthesis; ADP-L-glycero-beta-D-manno-heptose biosynthesis; ADP-L-glycero-beta-D-manno-heptose from D-glycero-beta-D-manno-heptose 7-phosphate: step 3/4. Catalyzes the phosphorylation of D-glycero-D-manno-heptose 7-phosphate at the C-1 position to selectively form D-glycero-beta-D-manno-heptose-1,7-bisphosphate. Functionally, catalyzes the ADP transfer from ATP to D-glycero-beta-D-manno-heptose 1-phosphate, yielding ADP-D-glycero-beta-D-manno-heptose. This is Bifunctional protein HldE from Citrobacter koseri (strain ATCC BAA-895 / CDC 4225-83 / SGSC4696).